The primary structure comprises 78 residues: Large ribosomal subunit protein bL28 (78 aa).

This sequence belongs to the bacterial ribosomal protein bL28 family.

This is Large ribosomal subunit protein bL28 from Pseudomonas aeruginosa (strain LESB58).